The chain runs to 585 residues: Beta-(1--&gt;2)glucan export ATP-binding/permease protein NdvA (585 aa).

One can recognise an ABC transmembrane type-1 domain in the interval 21–301 (VGAIVIANIV…MKAFATQIFE (281 aa)). Transmembrane regions (helical) follow at residues 22 to 42 (GAIV…PILF), 55 to 75 (VAPM…AFVL), 136 to 156 (QHLA…AMDV), 158 to 178 (LSLI…VVMS), 245 to 265 (LNRI…TVLV), and 269 to 289 (ELGV…IGRL). An ABC transporter domain is found at 335 to 569 (VEFRDISFDF…NGRFAALLRA (235 aa)). 368-375 (GPTGAGKT) serves as a coordination point for ATP.

This sequence belongs to the ABC transporter superfamily. Beta-(1--&gt;2)glucan exporter (TC 3.A.1.108.1) family. As to quaternary structure, homodimer.

It localises to the cell inner membrane. The enzyme catalyses [(1-&gt;2)-beta-D-glucosyl](n)(in) + ATP + H2O = [(1-&gt;2)-beta-D-glucosyl](n)(out) + ADP + phosphate + H(+). Its function is as follows. Involved in beta-(1--&gt;2)glucan export which is required for nodulation of legume roots. May be involved in other classes of oligosaccharides export. Transmembrane domains (TMD) form a pore in the inner membrane and the ATP-binding domain (NBD) is responsible for energy generation. This Rhizobium meliloti (strain 1021) (Ensifer meliloti) protein is Beta-(1--&gt;2)glucan export ATP-binding/permease protein NdvA.